We begin with the raw amino-acid sequence, 427 residues long: Trigger factor (427 aa).

The PPIase FKBP-type domain occupies G163–P248.

This sequence belongs to the FKBP-type PPIase family. Tig subfamily.

The protein localises to the cytoplasm. It catalyses the reaction [protein]-peptidylproline (omega=180) = [protein]-peptidylproline (omega=0). Functionally, involved in protein export. Acts as a chaperone by maintaining the newly synthesized protein in an open conformation. Functions as a peptidyl-prolyl cis-trans isomerase. This is Trigger factor from Streptococcus pneumoniae (strain Taiwan19F-14).